We begin with the raw amino-acid sequence, 338 residues long: Protein mono-ADP-ribosyltransferase PARP11 (338 aa).

The residue at position 13 (Glu13) is an ADP-ribosyl glutamic acid. At Lys18 the chain carries N6-(ADP-ribosyl)lysine. One can recognise a WWE domain in the interval 22–106; sequence NEVDDMDTSD…TTGKQRLIKR (85 aa). Cys56 and Cys72 each carry ADP-ribosylcysteine. Asp87 carries the ADP-ribosyl aspartic acid modification. One can recognise a PARP catalytic domain in the interval 123 to 338; the sequence is IPMPPHWENV…IYPEYLIDFH (216 aa).

Belongs to the ARTD/PARP family. As to quaternary structure, interacts with PARP12; this interaction plays a role in zika virus suppression. In terms of processing, auto-mono-ADP-ribosylated.

It is found in the nucleus. It localises to the nuclear pore complex. The catalysed reaction is L-aspartyl-[protein] + NAD(+) = 4-O-(ADP-D-ribosyl)-L-aspartyl-[protein] + nicotinamide. It carries out the reaction L-cysteinyl-[protein] + NAD(+) = S-(ADP-D-ribosyl)-L-cysteinyl-[protein] + nicotinamide + H(+). It catalyses the reaction L-glutamyl-[protein] + NAD(+) = 5-O-(ADP-D-ribosyl)-L-glutamyl-[protein] + nicotinamide. The enzyme catalyses L-lysyl-[protein] + NAD(+) = N(6)-(ADP-D-ribosyl)-L-lysyl-[protein] + nicotinamide + H(+). Its function is as follows. Mono-ADP-ribosyltransferase that mediates mono-ADP-ribosylation of target proteins. Plays a role in nuclear envelope stability and nuclear remodeling during spermiogenesis. Inhibits the type I interferon activated signaling pathway. Mechanistically, mono-ADP-ribosylates beta-TrCP/BTRC to promote IFNAR1 ubiquitination and protect BTRC from ubiquitin-proteasome degradation. Additionally, acts as an antiviral factor by cooperating with PARP12 to suppress Zika virus replication, independent of IFNAR1 regulation or intrinsic PARP enzymatic activity. Instead, facilitates the degradation of viral NS1 and NS3 proteins, potentially disrupting viral replication. The protein is Protein mono-ADP-ribosyltransferase PARP11 of Homo sapiens (Human).